We begin with the raw amino-acid sequence, 487 residues long: Transmembrane protein 161B (487 aa).

N34 carries an N-linked (GlcNAc...) asparagine glycan. The helical transmembrane segment at 107–127 (LVDFTVAATVVYLVTEVYYNF) threads the bilayer. The N-linked (GlcNAc...) asparagine glycan is linked to N135. The next 2 membrane-spanning stretches (helical) occupy residues 136–156 (ISLV…FSLT) and 169–189 (SVCV…LIVT). The N-linked (GlcNAc...) asparagine glycan is linked to N203. Transmembrane regions (helical) follow at residues 228–248 (FKFF…FPGL), 265–285 (ITQT…LLWV), 305–325 (LMTE…LCAL), 367–387 (VFYY…MLLH), and 459–479 (LSFL…FGLF).

The protein belongs to the TMEM161 family.

Its subcellular location is the cell membrane. Its function is as follows. Essential for maintaining normal cardiac rhythm in the developing heart and for neonatal survival. Inhibits potassium and calcium currents in the cardiomyocytes, this assists in timely action potential repolarization and thereby maintains normal cardiac rhythm. The sequence is that of Transmembrane protein 161B (TMEM161B) from Homo sapiens (Human).